Consider the following 705-residue polypeptide: Structure-specific endonuclease subunit SLX1 homolog (705 aa).

In terms of domain architecture, GIY-YIG spans 4 to 90 (RFHCVYLLTS…TASARLRHAI (87 aa)). Disordered regions lie at residues 155 to 192 (RASS…DSKG) and 290 to 323 (ASFA…RVHT). Polar residues-rich tracts occupy residues 160-175 (RVGT…SLQG) and 310-320 (STGSRTPSPQR). The SLX1-type zinc-finger motif lies at 446 to 526 (CSLCTLPLQP…PSQPCPCPLC (81 aa)). Positions 595–604 (KGAGEAPGAA) are enriched in low complexity. Residues 595-628 (KGAGEAPGAASTVRASTMHVGPARRDAPRVSSPS) are disordered.

This sequence belongs to the SLX1 family. In terms of assembly, forms a heterodimer with a member of the SLX4 family. It depends on a divalent metal cation as a cofactor.

It localises to the nucleus. Functionally, catalytic subunit of a heterodimeric structure-specific endonuclease that resolves DNA secondary structures generated during DNA repair and recombination. Has endonuclease activity towards branched DNA substrates, introducing single-strand cuts in duplex DNA close to junctions with ss-DNA. In Leishmania infantum, this protein is Structure-specific endonuclease subunit SLX1 homolog.